Reading from the N-terminus, the 356-residue chain is Histidinol-phosphate aminotransferase 2 (356 aa).

Position 213 is an N6-(pyridoxal phosphate)lysine (K213).

Belongs to the class-II pyridoxal-phosphate-dependent aminotransferase family. Histidinol-phosphate aminotransferase subfamily. Homodimer. It depends on pyridoxal 5'-phosphate as a cofactor.

The enzyme catalyses L-histidinol phosphate + 2-oxoglutarate = 3-(imidazol-4-yl)-2-oxopropyl phosphate + L-glutamate. The protein operates within amino-acid biosynthesis; L-histidine biosynthesis; L-histidine from 5-phospho-alpha-D-ribose 1-diphosphate: step 7/9. In Burkholderia mallei (strain ATCC 23344), this protein is Histidinol-phosphate aminotransferase 2.